The following is a 1529-amino-acid chain: DNA-directed RNA polymerase subunit beta' (1529 aa).

Positions 156, 158, 183, and 186 each coordinate Zn(2+). Mg(2+) contacts are provided by aspartate 1328, aspartate 1330, and aspartate 1332.

The protein belongs to the RNA polymerase beta' chain family. RpoC1 subfamily. As to quaternary structure, in plastids the minimal PEP RNA polymerase catalytic core is composed of four subunits: alpha, beta, beta', and beta''. When a (nuclear-encoded) sigma factor is associated with the core the holoenzyme is formed, which can initiate transcription. Requires Mg(2+) as cofactor. Zn(2+) serves as cofactor.

It localises to the plastid. Its subcellular location is the chloroplast. The enzyme catalyses RNA(n) + a ribonucleoside 5'-triphosphate = RNA(n+1) + diphosphate. Its function is as follows. DNA-dependent RNA polymerase catalyzes the transcription of DNA into RNA using the four ribonucleoside triphosphates as substrates. This Tetradesmus obliquus (Green alga) protein is DNA-directed RNA polymerase subunit beta'.